We begin with the raw amino-acid sequence, 113 residues long: Carrot ABA-induced in somatic embryos 3 (113 aa).

Composition is skewed to basic and acidic residues over residues 1-17 (MASGQEKRSELDARAKQ), 32-52 (EAQEHLAEGRSKGGHTRKEQL), and 65-77 (GETRREQMGKEGY). The segment at 1 to 113 (MASGQEKRSE…IDQSKFRTKS (113 aa)) is disordered.

The protein belongs to the small hydrophilic plant seed protein family. As to expression, expressed in embryogenic cells, somatic embryos and seeds at the later stages of development. Not detected in leaves.

In Daucus carota (Wild carrot), this protein is Carrot ABA-induced in somatic embryos 3.